The sequence spans 182 residues: Adenine phosphoribosyltransferase (182 aa).

Belongs to the purine/pyrimidine phosphoribosyltransferase family. Homodimer.

It is found in the cytoplasm. The enzyme catalyses AMP + diphosphate = 5-phospho-alpha-D-ribose 1-diphosphate + adenine. It participates in purine metabolism; AMP biosynthesis via salvage pathway; AMP from adenine: step 1/1. Its function is as follows. Catalyzes a salvage reaction resulting in the formation of AMP, that is energically less costly than de novo synthesis. The protein is Adenine phosphoribosyltransferase of Campylobacter hominis (strain ATCC BAA-381 / DSM 21671 / CCUG 45161 / LMG 19568 / NCTC 13146 / CH001A).